A 492-amino-acid polypeptide reads, in one-letter code: Adenosylhomocysteinase (492 aa).

Positions 68, 153, and 215 each coordinate substrate. NAD(+) is bound at residue 216-218 (TTT). Substrate contacts are provided by Lys-245 and Asp-249. NAD(+) contacts are provided by residues Asn-250, 279-284 (GYGDVG), Glu-302, Asn-337, 358-360 (IGH), and Asn-406.

This sequence belongs to the adenosylhomocysteinase family. The cofactor is NAD(+).

The protein localises to the cytoplasm. The enzyme catalyses S-adenosyl-L-homocysteine + H2O = L-homocysteine + adenosine. The protein operates within amino-acid biosynthesis; L-homocysteine biosynthesis; L-homocysteine from S-adenosyl-L-homocysteine: step 1/1. Its function is as follows. May play a key role in the regulation of the intracellular concentration of adenosylhomocysteine. The polypeptide is Adenosylhomocysteinase (Mycobacterium marinum (strain ATCC BAA-535 / M)).